The chain runs to 340 residues: Selenide, water dikinase (340 aa).

Sec17 is a catalytic residue. A non-standard amino acid (selenocysteine) is located at residue Sec17. ATP contacts are provided by residues Lys20 and 45-47 (NNE). Asp48 serves as a coordination point for Mg(2+). ATP-binding positions include Asp65, Asp88, and 136-138 (GHT). Residue Asp88 coordinates Mg(2+). Asp224 is a binding site for Mg(2+).

Belongs to the selenophosphate synthase 1 family. Class I subfamily. In terms of assembly, homodimer. The cofactor is Mg(2+).

It catalyses the reaction hydrogenselenide + ATP + H2O = selenophosphate + AMP + phosphate + 2 H(+). In terms of biological role, synthesizes selenophosphate from selenide and ATP. This is Selenide, water dikinase from Campylobacter jejuni subsp. jejuni serotype O:2 (strain ATCC 700819 / NCTC 11168).